We begin with the raw amino-acid sequence, 106 residues long: L-rhamnose mutarotase (106 aa).

Tyr20 provides a ligand contact to substrate. The active-site Proton donor is the His24. Substrate-binding positions include Tyr43 and 78-79 (WW).

It belongs to the rhamnose mutarotase family. As to quaternary structure, homodimer.

Its subcellular location is the cytoplasm. The catalysed reaction is alpha-L-rhamnose = beta-L-rhamnose. It participates in carbohydrate metabolism; L-rhamnose metabolism. Its function is as follows. Involved in the anomeric conversion of L-rhamnose. The protein is L-rhamnose mutarotase of Verminephrobacter eiseniae (strain EF01-2).